The chain runs to 145 residues: Large ribosomal subunit protein uL15 (145 aa).

Composition is skewed to basic residues over residues 1 to 13 (MVRERTKKLRGGH) and 19 to 29 (KAGRGKGKKGG). The segment at 1 to 33 (MVRERTKKLRGGHYGRGMKAGRGKGKKGGRGNA) is disordered.

Belongs to the universal ribosomal protein uL15 family. In terms of assembly, part of the 50S ribosomal subunit.

Binds to the 23S rRNA. In Thermoplasma volcanium (strain ATCC 51530 / DSM 4299 / JCM 9571 / NBRC 15438 / GSS1), this protein is Large ribosomal subunit protein uL15.